The primary structure comprises 485 residues: GTPase Der (485 aa).

2 EngA-type G domains span residues 3 to 167 and 176 to 349; these read PTIA…PEPE and PVFA…NAAM. GTP-binding positions include 9 to 16, 56 to 60, 119 to 122, 182 to 189, 229 to 233, and 294 to 297; these read GRPNVGKS, DTGGF, NKGE, DTAGV, and NKWD. Residues 350–434 form the KH-like domain; the sequence is IKMPTPKITR…PLRIQYNVSE (85 aa). Residues 435-485 are disordered; it reads NPYENADDKPKKKPLRRVSLSNRIEKREGRKEEKNRFKKKTKVSVKKQFSK. The segment covering 457–469 has biased composition (basic and acidic residues); sequence RIEKREGRKEEKN. A compositionally biased stretch (basic residues) spans 470–485; the sequence is RFKKKTKVSVKKQFSK.

It belongs to the TRAFAC class TrmE-Era-EngA-EngB-Septin-like GTPase superfamily. EngA (Der) GTPase family. As to quaternary structure, associates with the 50S ribosomal subunit.

GTPase that plays an essential role in the late steps of ribosome biogenesis. The protein is GTPase Der of Neisseria meningitidis serogroup A / serotype 4A (strain DSM 15465 / Z2491).